Consider the following 228-residue polypeptide: L-ribulose-5-phosphate 4-epimerase UlaF (228 aa).

Residues 26 to 27 (GN), 43 to 44 (SG), and 72 to 73 (SS) contribute to the substrate site. Asp-74, His-93, and His-95 together coordinate Zn(2+). Asp-118 acts as the Proton donor/acceptor in catalysis. Zn(2+) is bound at residue His-167. Tyr-225 serves as the catalytic Proton donor/acceptor.

The protein belongs to the aldolase class II family. AraD/FucA subfamily. The cofactor is Zn(2+).

The catalysed reaction is L-ribulose 5-phosphate = D-xylulose 5-phosphate. It participates in cofactor degradation; L-ascorbate degradation; D-xylulose 5-phosphate from L-ascorbate: step 4/4. Catalyzes the isomerization of L-ribulose 5-phosphate to D-xylulose 5-phosphate. Is involved in the anaerobic L-ascorbate utilization. This Escherichia coli (strain SMS-3-5 / SECEC) protein is L-ribulose-5-phosphate 4-epimerase UlaF.